Here is a 648-residue protein sequence, read N- to C-terminus: Forkhead box protein N1 (648 aa).

A disordered region spans residues 1-95; sequence MVSLLPPQSD…PGPGSFRLSP (95 aa). A compositionally biased stretch (polar residues) spans 38–50; it reads APQNKHANFSCSS. Residues 54–67 are compositionally biased toward pro residues; the sequence is DGPPERTPSLPPHS. Positions 271-367 form a DNA-binding region, fork-head; the sequence is KPIYSYSILI…EELQKWKRKD (97 aa). Disordered regions lie at residues 392-432, 457-521, and 629-648; these read LGSP…APGP, HLSP…TLLP, and SAAA…LALA. Positions 398 to 412 are enriched in pro residues; sequence GCPPPGLAGPGPIRP.

In terms of tissue distribution, bone marrow (at protein level). Expressed in thymus and skin.

The protein resides in the nucleus. Transcriptional regulator which regulates the development, differentiation, and function of thymic epithelial cells (TECs) both in the prenatal and postnatal thymus. Acts as a master regulator of the TECs lineage development and is required from the onset of differentiation in progenitor TECs in the developing fetus to the final differentiation steps through which TECs mature to acquire their full functionality. Regulates, either directly or indirectly the expression of a variety of genes that mediate diverse aspects of thymus development and function, including MHC Class II, DLL4, CCL25, CTSL, CD40 and PAX1. Regulates the differentiation of the immature TECs into functional cortical TECs (cTECs) and medullary TECs (mTECs). Essential for maintenance of mTECs population in the postnatal thymus. Involved in the morphogenesis and maintenance of the three-dimensional thymic microstructure which is necessary for a fully functional thymus. Plays an important role in the maintenance of hematopoiesis and particularly T lineage progenitors within the bone marrow niche with age. Essential for the vascularization of the thymus anlage. Promotes the terminal differentiation of epithelial cells in the epidermis and hair follicles, partly by negatively regulating the activity of protein kinase C. This chain is Forkhead box protein N1 (Foxn1), found in Mus musculus (Mouse).